The following is a 489-amino-acid chain: Argininosuccinate lyase (489 aa).

A disordered region spans residues 1–20; it reads MSEPSAAVGQRPGGESAPAH.

It belongs to the lyase 1 family. Argininosuccinate lyase subfamily.

The protein resides in the cytoplasm. The enzyme catalyses 2-(N(omega)-L-arginino)succinate = fumarate + L-arginine. It functions in the pathway amino-acid biosynthesis; L-arginine biosynthesis; L-arginine from L-ornithine and carbamoyl phosphate: step 3/3. The polypeptide is Argininosuccinate lyase (Acidothermus cellulolyticus (strain ATCC 43068 / DSM 8971 / 11B)).